The primary structure comprises 282 residues: Stress response regulator protein 1 (282 aa).

Low complexity-rich tracts occupy residues 12 to 30 and 45 to 58; these read NLSR…HSST and NSQS…SNNN. Disordered stretches follow at residues 12–31, 43–84, and 112–139; these read NLSR…SSTV, DINS…DDED, and LTPF…TTVV. Residues 66 to 77 are compositionally biased toward polar residues; it reads SDYNSYTHNQYY. Residues 125–139 show a composition bias toward low complexity; that stretch reads SIISSKSSNKSTTVV. The Response regulatory domain occupies 155-273; it reads SFLIVDDNII…LDFMANSIDD (119 aa). D206 carries the post-translational modification 4-aspartylphosphate.

Functionally, required for stress adaptation, morphogenesis and virulence. This Candida albicans (strain SC5314 / ATCC MYA-2876) (Yeast) protein is Stress response regulator protein 1 (SRR1).